A 955-amino-acid chain; its full sequence is Centrosomal protein of 112 kDa (955 aa).

Residues 277 to 954 (QKHDADVQKI…QEELTTYQGR (678 aa)) are a coiled coil.

The protein resides in the cytoplasm. It is found in the cytoskeleton. Its subcellular location is the microtubule organizing center. It localises to the centrosome. This is Centrosomal protein of 112 kDa (CEP112) from Homo sapiens (Human).